The sequence spans 361 residues: Zinc transporter ZIP13 (361 aa).

Residues 1 to 6 lie on the Lumenal side of the membrane; it reads MPGCPC. The helical transmembrane segment at 7–27 threads the bilayer; it reads PGCGMAGQRLLFLTVLALELL. Over 28 to 68 the chain is Cytoplasmic; the sequence is ERAGGSQPALRSLGAAAACRLDNKESESWGALLSGERLDTW. The chain crosses the membrane as a helical span at residues 69-89; the sequence is ICSLLGSLMVGLSGVFPLLVI. The Lumenal segment spans residues 90-108; the sequence is PLEMGTLLQSEAGAWRLRQ. Residues 109–129 traverse the membrane as a helical segment; it reads LLSFALGGLLGNVFLHLLPEA. Over 130–150 the chain is Cytoplasmic; the sequence is WAYTCNITPGGEGQSLQRQQQ. The chain crosses the membrane as a helical span at residues 151–171; the sequence is LGLWVIAGFLTFLALEKMFLN. At 172–232 the chain is on the lumenal side; that stretch reads SKEDPSQAPS…TIDNFTHGLA (61 aa). A helical transmembrane segment spans residues 233–253; the sequence is VAASFLVSKKIGLLTTMAILL. The XEXPHE-motif motif lies at 254-259; it reads HEIPHE. Topologically, residues 254-275 are cytoplasmic; it reads HEIPHEVGDFAILLRAGFDRWT. A helical membrane pass occupies residues 276–296; that stretch reads AAKLQFSTALGGLLGACFAIC. At 297 to 306 the chain is on the lumenal side; sequence TQSPKGVEET. A helical membrane pass occupies residues 307-327; it reads VVWILPFTSGGFLYIALVNVL. The Cytoplasmic portion of the chain corresponds to 328–339; that stretch reads PDLLEEDDPWHS. Residues 340-360 traverse the membrane as a helical segment; that stretch reads LQQVLLLCSGVLVMVLLSLFV. Position 361 (Glu361) is a topological domain, lumenal.

This sequence belongs to the ZIP transporter (TC 2.A.5) family. Homodimer. Highly expressed in some tissues such as bone and eye. Expressed in osteoblasts of tibia and of alveolar bone, in proliferative zone of growth plate, and in odontoblasts on the forming of the dentine of crown in molar tooth. Also expressed fibroblasts in reticular layer of dermis of skin.

It is found in the golgi apparatus membrane. The protein resides in the cytoplasmic vesicle membrane. It localises to the endoplasmic reticulum membrane. It catalyses the reaction Zn(2+)(in) = Zn(2+)(out). Functionally, functions as a zinc transporter transporting Zn(2+) from the Golgi apparatus to the cytosol and thus influences the zinc level at least in areas of the cytosol. May regulate beige adipocyte differentiation. This chain is Zinc transporter ZIP13, found in Mus musculus (Mouse).